A 430-amino-acid polypeptide reads, in one-letter code: Zinc finger CCCH domain-containing protein 48 (430 aa).

2 disordered regions span residues 1–27 and 56–90; these read MDLDMNGGNKRVFQRLGGGSNRPTTDS and GSGPVAASSNKRVADESGFAGPSHRRGPGFSGTAN. The segment at 26 to 52 adopts a C3H1-type 1 zinc-finger fold; that stretch reads DSNQKVCFHWRAGRCNRYPCPYLHREL. Residues 102 to 129 form a C3H1-type 2 zinc finger; sequence TKTEKLCKFWVDGNCPYGDKCRYLHCWS. WD repeat units lie at residues 142–183, 221–258, 265–304, 306–342, 345–389, and 391–429; these read GHQK…GVLN, GPVGQVYSLVVGTDLLFAGTQDGSILVWRYNSTTSCFD, GHTLAVVSLYVGANRLYSGAMDNSIKVWSLDNLQCIQTLT, HTSVVMSLICWDQFLLSCSLDNTVKIWAATEGGNLEV, THKE…ERGK, and LAKQEIRSIQIGPGGIFFTGDGSGQVKVWKWSTESTPIL.

This chain is Zinc finger CCCH domain-containing protein 48 (ZFWD1), found in Arabidopsis thaliana (Mouse-ear cress).